Here is a 485-residue protein sequence, read N- to C-terminus: MAPTFTNSNGQPIPEPFATQRVGQHGPLLLQDFNLIDSLAHFDRERIPERVVHAKGSGAYGVFEVTDDITDVCAAKFLDTVGKKTRIFTRFSTVGGELGSADTARDPRGFATKFYTEEGNLDLVYNNTPVFFIRDPSKFPHFIHTQKRNPETHLKDANMFWDYLTTNEESVHQVMVLFSDRGTPASYREMNGYSGHTYKWSNNKGEWFYVQVHFISDQGIKTLTNEEAGSLAGSNPDYAQEDLFKNIAAGNYPSWTCYIQTMTEAQAKEAEFSVFDLTKVWPHGKYPMRRFGKFTLNENPKNYFAEVEQAAFSPAHTVPHMEPSADPVLQSRLFSYADTHRHRLGTNYTQIPVNCPVTGAVFNPHMRDGAMNVNGNLGNHPNYLASDKPIEFKQFSLQEDQEVWHGAATPFHWKATPADFKQATELWKVLKKYPNQQEHLAHNVAVHASAADAPIQDRVIAYFTKVHPDLGDLIKKEILELSPRK.

Residues H53 and N126 contribute to the active site. Residue Y336 coordinates heme.

It belongs to the catalase family. In terms of assembly, homotetramer. Heme serves as cofactor.

The protein localises to the peroxisome matrix. The catalysed reaction is 2 H2O2 = O2 + 2 H2O. Catalyzes the degradation of hydrogen peroxide (H(2)O(2)) generated by peroxisomal oxidases to water and oxygen, thereby protecting cells from the toxic effects of hydrogen peroxide. This is Peroxisomal catalase (POX9) from Candida tropicalis (Yeast).